Consider the following 185-residue polypeptide: Ribosome-recycling factor (185 aa).

The protein belongs to the RRF family.

It localises to the cytoplasm. Its function is as follows. Responsible for the release of ribosomes from messenger RNA at the termination of protein biosynthesis. May increase the efficiency of translation by recycling ribosomes from one round of translation to another. The protein is Ribosome-recycling factor of Pseudomonas syringae pv. tomato (strain ATCC BAA-871 / DC3000).